A 179-amino-acid chain; its full sequence is Large ribosomal subunit protein uL6 (179 aa).

The protein belongs to the universal ribosomal protein uL6 family. Part of the 50S ribosomal subunit.

This protein binds to the 23S rRNA, and is important in its secondary structure. It is located near the subunit interface in the base of the L7/L12 stalk, and near the tRNA binding site of the peptidyltransferase center. This is Large ribosomal subunit protein uL6 from Methylacidiphilum infernorum (isolate V4) (Methylokorus infernorum (strain V4)).